Consider the following 461-residue polypeptide: ERBB receptor feedback inhibitor 1 (461 aa).

Ser2 bears the N-acetylserine mark. 2 positions are modified to phosphothreonine: Thr126 and Thr130. Residues 228–353 form a disordered region; sequence QNRVVPDPNP…VMPPTQSFAP (126 aa). Residues Ser251 and Ser272 each carry the phosphoserine modification. Over residues 265 to 274 the composition is skewed to polar residues; the sequence is SSCTHRASPS. Positions 283–292 are enriched in pro residues; sequence PPRVPIPPRP. Ser301 carries the post-translational modification Phosphoserine. Residues 311 to 324 show a composition bias toward basic and acidic residues; sequence DEDRPPKVPPREPL. Positions 325–336 are enriched in polar residues; the sequence is SRSNSRTPSPKS. An interaction with EGFR and ERBB2 and regulation of EGFR activation region spans residues 333 to 362; the sequence is SPKSLPSYLNGVMPPTQSFAPDPKYVSSKA. Ser460 is modified (phosphoserine).

It belongs to the MIG6 family. Interacts with EGFR. Interacts with ERBB2. Detected in lung, in airway epithelial cells and alveolar type 2 cells (at protein level). Detected in uterus stroma, luminal epithelium and glandular epithelium.

The protein resides in the cytoplasm. It is found in the cell membrane. Its subcellular location is the nucleus. Negative regulator of EGFR signaling in skin morphogenesis. Acts as a negative regulator for several EGFR family members, including ERBB2, ERBB3 and ERBB4. Inhibits EGFR catalytic activity by interfering with its dimerization. Inhibits autophosphorylation of EGFR, ERBB2 and ERBB4. Important for normal keratinocyte proliferation and differentiation. Plays a role in modulating the response to steroid hormones in the uterus. Required for normal response to progesterone in the uterus and for fertility. Mediates epithelial estrogen responses in the uterus by regulating ESR1 levels and activation. Important for regulation of endometrium cell proliferation. Important for normal prenatal and perinatal lung development. This is ERBB receptor feedback inhibitor 1 (Errfi1) from Mus musculus (Mouse).